The following is a 642-amino-acid chain: Threonine--tRNA ligase (642 aa).

In terms of domain architecture, TGS spans 1–61 (MPVITLPDGS…ETDAELSIIT (61 aa)). A catalytic region spans residues 243–534 (DHRKIGKQLD…LIEEYAGRFP (292 aa)). Zn(2+) is bound by residues Cys334, His385, and His511.

Belongs to the class-II aminoacyl-tRNA synthetase family. In terms of assembly, homodimer. The cofactor is Zn(2+).

The protein resides in the cytoplasm. The enzyme catalyses tRNA(Thr) + L-threonine + ATP = L-threonyl-tRNA(Thr) + AMP + diphosphate + H(+). In terms of biological role, catalyzes the attachment of threonine to tRNA(Thr) in a two-step reaction: L-threonine is first activated by ATP to form Thr-AMP and then transferred to the acceptor end of tRNA(Thr). Also edits incorrectly charged L-seryl-tRNA(Thr). The sequence is that of Threonine--tRNA ligase from Shewanella sp. (strain W3-18-1).